A 232-amino-acid chain; its full sequence is Lipoprotein-releasing system ATP-binding protein LolD (232 aa).

Residues 11-231 form the ABC transporter domain; the sequence is VYLHDIKRQY…SIEDGVIVEL (221 aa). 47–54 lines the ATP pocket; the sequence is APSGSGKS.

It belongs to the ABC transporter superfamily. Lipoprotein translocase (TC 3.A.1.125) family. The complex is composed of two ATP-binding proteins (LolD) and two transmembrane proteins (LolC and LolE).

It localises to the cell inner membrane. Its function is as follows. Part of the ABC transporter complex LolCDE involved in the translocation of mature outer membrane-directed lipoproteins, from the inner membrane to the periplasmic chaperone, LolA. Responsible for the formation of the LolA-lipoprotein complex in an ATP-dependent manner. The chain is Lipoprotein-releasing system ATP-binding protein LolD from Rhodopseudomonas palustris (strain BisB5).